Consider the following 110-residue polypeptide: Large ribosomal subunit protein uL22 (110 aa).

The protein belongs to the universal ribosomal protein uL22 family. In terms of assembly, part of the 50S ribosomal subunit.

Its function is as follows. This protein binds specifically to 23S rRNA; its binding is stimulated by other ribosomal proteins, e.g. L4, L17, and L20. It is important during the early stages of 50S assembly. It makes multiple contacts with different domains of the 23S rRNA in the assembled 50S subunit and ribosome. The globular domain of the protein is located near the polypeptide exit tunnel on the outside of the subunit, while an extended beta-hairpin is found that lines the wall of the exit tunnel in the center of the 70S ribosome. This Photorhabdus laumondii subsp. laumondii (strain DSM 15139 / CIP 105565 / TT01) (Photorhabdus luminescens subsp. laumondii) protein is Large ribosomal subunit protein uL22.